Consider the following 180-residue polypeptide: Putative 3-methyladenine DNA glycosylase (180 aa).

The protein belongs to the DNA glycosylase MPG family.

In Ehrlichia chaffeensis (strain ATCC CRL-10679 / Arkansas), this protein is Putative 3-methyladenine DNA glycosylase.